The chain runs to 91 residues: MAASSRAQVLDLYRAMMRESKHFSAYNYRMYAVRRIRDAFRENKNVKDPVEIQALVNKAKRDLEIIRRQVHIGQLYSTDKLIIENQEKPRT.

Pantetheine 4'-phosphate-binding residues include R6 and K44. Position 47 is an N6-succinyllysine (K47).

This sequence belongs to the complex I LYR family. As to quaternary structure, homodimer. Component of the mitochondrial core iron-sulfur cluster (ISC) complex composed of NFS1, LYRM4, NDUFAB1, ISCU, FXN, and FDX2; this complex is a heterohexamer containing two copies of each monomer. Component of the cyteine desulfurase complex composed of NFS1, LYRM4 and NDUFAB1; this complex contributes to the stability and cysteine desulfurase activity of NFS1. Interacts with FXN; this interaction is nickel-dependent. Interacts with the cytoplasmic form of NFS1; the complex increases the stability of NFS1. Forms a complex with the cytoplasmic form of NFS1; this complex increases the stability and cysteine desulfurase activity of NFS1. Interacts with NFS1. Component of a complex composed of FXN, NFS1, LYRM4 and ISCU.

It is found in the mitochondrion. The protein localises to the nucleus. It functions in the pathway cofactor biosynthesis; iron-sulfur cluster biosynthesis. Its function is as follows. Stabilizing factor, of the core iron-sulfur cluster (ISC) assembly complex, that regulates, in association with NDUFAB1, the stability and the cysteine desulfurase activity of NFS1 and participates in the [2Fe-2S] clusters assembly on the scaffolding protein ISCU. The core iron-sulfur cluster (ISC) assembly complex is involved in the de novo synthesis of a [2Fe-2S] cluster, the first step of the mitochondrial iron-sulfur protein biogenesis. This process is initiated by the cysteine desulfurase complex (NFS1:LYRM4:NDUFAB1) that produces persulfide which is delivered on the scaffold protein ISCU in a FXN-dependent manner. Then this complex is stabilized by FDX2 which provides reducing equivalents to accomplish the [2Fe-2S] cluster assembly. Finally, the [2Fe-2S] cluster is transferred from ISCU to chaperone proteins, including HSCB, HSPA9 and GLRX5. May also participates in the iron-sulfur protein biogenesis in the cytoplasm through its interaction with the cytoplasmic form of NFS1. The polypeptide is LYR motif-containing protein 4 (Mus musculus (Mouse)).